The primary structure comprises 177 residues: Voltage-dependent L-type calcium channel subunit alpha-1C (177 aa).

Residues 27 to 45 (ITFFRLFRVMRLVKLLSRG) form a helical membrane-spanning segment. The helical transmembrane segment at 64–84 (YVALLIVMLFFIYAVIGMQVF) threads the bilayer. Residue asparagine 90 is glycosylated (N-linked (GlcNAc...) asparagine). The segment at residues 107–125 (AVLLLFRCATGEAWQEIML) is an intramembrane region (pore-forming). A Selectivity filter of repeat IV motif is present at residues 116–119 (TGEA). Cysteine 133 and cysteine 149 are joined by a disulfide. Asparagine 141 carries an N-linked (GlcNAc...) asparagine glycan. The chain crosses the membrane as a helical span at residues 154 to 177 (AVFYFISFYMLCAFLIIDLFVAVI).

It belongs to the calcium channel alpha-1 subunit (TC 1.A.1.11) family. CACNA1C subfamily. In terms of assembly, component of a calcium channel complex consisting of a pore-forming alpha subunit (CACNA1C) and ancillary beta, gamma and delta subunits. The channel complex contains alpha, beta, gamma and delta subunits in a 1:1:1:1 ratio, i.e. it contains only one of each type of subunit. CACNA1C channel activity is modulated by ancillary subunits, such as CACNB2, CACNB3, CACNA2D1 and CACNA2D4. Post-translationally, phosphorylation by PKA activates the channel.

The protein resides in the cell membrane. It is found in the perikaryon. The protein localises to the postsynaptic density membrane. It localises to the cell projection. Its subcellular location is the dendrite. The protein resides in the sarcolemma. It is found in the T-tubule. It catalyses the reaction Ca(2+)(in) = Ca(2+)(out). Inhibited by dihydropyridines (DHP), such as isradipine. Channel activity is regulated by Ca(2+) and calmodulin. Functionally, pore-forming, alpha-1C subunit of the voltage-gated calcium channel that gives rise to L-type calcium currents. Mediates influx of calcium ions into the cytoplasm, and thereby triggers calcium release from the sarcoplasm. Plays an important role in excitation-contraction coupling in the heart. Required for normal heart development and normal regulation of heart rhythm. Required for normal contraction of smooth muscle cells in blood vessels and in the intestine. Essential for normal blood pressure regulation via its role in the contraction of arterial smooth muscle cells. Long-lasting (L-type) calcium channels belong to the 'high-voltage activated' (HVA) group. The polypeptide is Voltage-dependent L-type calcium channel subunit alpha-1C (CACNA1C) (Gallus gallus (Chicken)).